The sequence spans 297 residues: Glycerol-3-phosphate dehydrogenase [NAD(P)+] (297 aa).

NADPH-binding residues include Trp11, Arg33, and Lys79. 3 residues coordinate sn-glycerol 3-phosphate: Lys79, Gly107, and Ser109. Ala111 lines the NADPH pocket. Positions 161, 214, 224, 225, and 226 each coordinate sn-glycerol 3-phosphate. Catalysis depends on Lys161, which acts as the Proton acceptor. Residue Arg225 participates in NADPH binding. NADPH-binding residues include Val249 and Glu251.

This sequence belongs to the NAD-dependent glycerol-3-phosphate dehydrogenase family.

The protein resides in the cytoplasm. It carries out the reaction sn-glycerol 3-phosphate + NAD(+) = dihydroxyacetone phosphate + NADH + H(+). It catalyses the reaction sn-glycerol 3-phosphate + NADP(+) = dihydroxyacetone phosphate + NADPH + H(+). Its pathway is membrane lipid metabolism; glycerophospholipid metabolism. In terms of biological role, catalyzes the reduction of the glycolytic intermediate dihydroxyacetone phosphate (DHAP) to sn-glycerol 3-phosphate (G3P), the key precursor for phospholipid synthesis. The protein is Glycerol-3-phosphate dehydrogenase [NAD(P)+] of Campylobacter jejuni subsp. doylei (strain ATCC BAA-1458 / RM4099 / 269.97).